The primary structure comprises 347 residues: Integrin beta-1-binding protein 2 (347 aa).

The Zn(2+) site is built by Cys-5, Cys-10, Cys-24, and His-27. A CHORD 1 domain is found at 5 to 64 (CRNKGCGQHFDPNTNLPDSCCHHPGVPIFHDALKGWSCCRKRTVDFSEFLNIKGCTMGPH). The SH3-binding motif lies at 28-31 (PGVP). 4 residues coordinate Zn(2+): Cys-42, Cys-43, Cys-59, and His-64. The SH3-binding signature appears at 70–78 (PEAPQPEGP). Residues Cys-149 and Cys-154 each contribute to the Zn(2+) site. Residues 149 to 208 (CQNPGCDAVYQGPESDATPCTYHPGAPRFHEGMKSWSCCGIQTLDFGAFLAQPGCRVGRH) enclose the CHORD 2 domain. An SH2-binding motif is present at residues 158–161 (YQGP). Residues Cys-168 and His-171 each coordinate Zn(2+). Residues 172-175 (PGAP) carry the SH3-binding motif. Cys-186, Cys-187, Cys-203, and His-208 together coordinate Zn(2+). One can recognise a CS domain in the interval 215 to 304 (PASCRHDWHQ…ADPGSWAQLE (90 aa)). Residues 234–237 (YGQI) carry the SH2-binding motif. The tract at residues 319–347 (LEMDEEESDDSDDDLSWTEEEEEEEAMGE) is disordered. Acidic residues predominate over residues 320–347 (EMDEEESDDSDDDLSWTEEEEEEEAMGE).

Interacts with beta-1 integrin subunit. This interaction is regulated by divalent cations, and it occurs only in absence of calcium. As to expression, expressed in skeletal and cardiac muscles but not in other tissues.

Its function is as follows. May play a role during maturation and/or organization of muscles cells. The protein is Integrin beta-1-binding protein 2 (ITGB1BP2) of Homo sapiens (Human).